We begin with the raw amino-acid sequence, 601 residues long: Elongation factor 4 (601 aa).

One can recognise a tr-type G domain in the interval 7 to 189 (DNIRNFSIVA…AIVKRLPAPK (183 aa)). GTP is bound by residues 19–24 (DHGKST) and 136–139 (NKVD).

Belongs to the TRAFAC class translation factor GTPase superfamily. Classic translation factor GTPase family. LepA subfamily.

It is found in the cell inner membrane. The enzyme catalyses GTP + H2O = GDP + phosphate + H(+). Required for accurate and efficient protein synthesis under certain stress conditions. May act as a fidelity factor of the translation reaction, by catalyzing a one-codon backward translocation of tRNAs on improperly translocated ribosomes. Back-translocation proceeds from a post-translocation (POST) complex to a pre-translocation (PRE) complex, thus giving elongation factor G a second chance to translocate the tRNAs correctly. Binds to ribosomes in a GTP-dependent manner. This Methylorubrum extorquens (strain CM4 / NCIMB 13688) (Methylobacterium extorquens) protein is Elongation factor 4.